The chain runs to 493 residues: Calcium-binding tyrosine phosphorylation-regulated protein (493 aa).

Residues 12–49 (YGLKTLLEGISRAVLKTNPSNINQFAAAYFQELTMYRG) enclose the RIIa domain. 4 disordered regions span residues 85–164 (EPGK…VSPE), 244–271 (DLGS…QEPP), 330–354 (NEQS…TTSG), and 426–493 (IVSD…STAE). Over residues 90–100 (SVESKVPTQME) the composition is skewed to polar residues. The span at 101–117 (KSTDTDEDNVTRTEYSD) shows a compositional bias: basic and acidic residues. A compositionally biased stretch (low complexity) spans 141 to 152 (SSKPATPKTTTP). Thr151 is modified (phosphothreonine). Ser155 carries the post-translational modification Phosphoserine. Polar residues-rich tracts occupy residues 426-442 (IVSD…NSVP) and 461-470 (SGTSVKSSSG). Residues 484-493 (IEPEGESTAE) are compositionally biased toward acidic residues.

In terms of assembly, interacts with FSCB. Isoform 3 self-associates. Isoform 3 and isoform 5 interact with GSK3B. Isoform 1 does not interact with GSK3B. Isoform 1 is phosphorylated on tyrosine residues during in vitro capacitation. Isoform 3 and isoform 5 are phosphorylated by GSK3B in vitro. Dephosphorylation affects its ability to bind calcium. In terms of tissue distribution, expressed in elongating spermatids and spermatozoa (at protein level). Isoform 1 is expressed in testis. Isoform 3 and isoform 5 are also expressed in brain, pancreas and numerous brain tumors.

Its subcellular location is the cytoplasm. The protein resides in the cytoskeleton. It is found in the cell projection. The protein localises to the cilium. It localises to the flagellum. Its subcellular location is the nucleus. May function as a regulator of both motility- and head-associated functions such as capacitation and the acrosome reaction. Isoform 1 binds calcium in vitro. Isoform 2 and isoform 6 probably bind calcium. Isoform 3 and isoform 5 do not bind calcium in vitro. Isoform 4 probably does not bind calcium. In Homo sapiens (Human), this protein is Calcium-binding tyrosine phosphorylation-regulated protein (CABYR).